The primary structure comprises 198 residues: Glycerol-3-phosphate acyltransferase (198 aa).

5 helical membrane-spanning segments follow: residues 1-21, 52-72, 81-101, 115-135, and 153-173; these read MILITSLAVLVSYLIGSIPAA, GPALLVAAFDILKGAIAVGLA, WTALCGVAAVLGHNFSPFLGF, LALDPVVGGGAFVVGVGCIWL, and LAAALARPGWLLLIVAFLAAL.

The protein belongs to the PlsY family. As to quaternary structure, probably interacts with PlsX.

Its subcellular location is the cell membrane. The enzyme catalyses an acyl phosphate + sn-glycerol 3-phosphate = a 1-acyl-sn-glycero-3-phosphate + phosphate. It participates in lipid metabolism; phospholipid metabolism. Functionally, catalyzes the transfer of an acyl group from acyl-phosphate (acyl-PO(4)) to glycerol-3-phosphate (G3P) to form lysophosphatidic acid (LPA). This enzyme utilizes acyl-phosphate as fatty acyl donor, but not acyl-CoA or acyl-ACP. This Deinococcus geothermalis (strain DSM 11300 / CIP 105573 / AG-3a) protein is Glycerol-3-phosphate acyltransferase.